A 289-amino-acid polypeptide reads, in one-letter code: Protease HtpX (289 aa).

A run of 2 helical transmembrane segments spans residues 6 to 26 (ILFLLTNLAITFVLGIVLNII) and 38 to 58 (TGILMMSLLFGFTGSLISLFM). His144 serves as a coordination point for Zn(2+). Residue Glu145 is part of the active site. His148 lines the Zn(2+) pocket. 2 helical membrane passes run 152–172 (GDMVTMTLLQGVLNTFVIFLS) and 194–214 (LVFWVVDIALQMIFGILATMI). Residue Glu223 coordinates Zn(2+).

It belongs to the peptidase M48B family. It depends on Zn(2+) as a cofactor.

Its subcellular location is the cell inner membrane. This is Protease HtpX from Haemophilus ducreyi (strain 35000HP / ATCC 700724).